The primary structure comprises 502 residues: Putative diacyglycerol O-acyltransferase Rv1760 (502 aa).

The active-site Proton acceptor is His174.

This sequence belongs to the long-chain O-acyltransferase family.

The catalysed reaction is an acyl-CoA + a 1,2-diacyl-sn-glycerol = a triacyl-sn-glycerol + CoA. It carries out the reaction di-(9Z)-octadecenoylglycerol + (9Z)-octadecenoyl-CoA = 1,2,3-tri-(9Z-octadecenoyl)-glycerol + CoA. It participates in glycerolipid metabolism; triacylglycerol biosynthesis. Its function is as follows. Catalyzes the terminal and only committed step in triacylglycerol synthesis by using diacylglycerol and fatty acyl CoA as substrates. Required for storage lipid synthesis. Functionally, upon expression in E.coli functions weakly as a triacylglycerol synthase, making triacylglycerol (TG) from diolein and long-chain fatty acyl-CoA. Has very weak wax synthase activity, incorporating palmityl alcohol into wax esters in the presence of palmitoyl-CoA. The sequence is that of Putative diacyglycerol O-acyltransferase Rv1760 from Mycobacterium tuberculosis (strain ATCC 25618 / H37Rv).